A 372-amino-acid polypeptide reads, in one-letter code: 4-hydroxy-3-methylbut-2-en-1-yl diphosphate synthase (flavodoxin) (372 aa).

4 residues coordinate [4Fe-4S] cluster: Cys270, Cys273, Cys305, and Glu312.

It belongs to the IspG family. The cofactor is [4Fe-4S] cluster.

It catalyses the reaction (2E)-4-hydroxy-3-methylbut-2-enyl diphosphate + oxidized [flavodoxin] + H2O + 2 H(+) = 2-C-methyl-D-erythritol 2,4-cyclic diphosphate + reduced [flavodoxin]. It functions in the pathway isoprenoid biosynthesis; isopentenyl diphosphate biosynthesis via DXP pathway; isopentenyl diphosphate from 1-deoxy-D-xylulose 5-phosphate: step 5/6. Functionally, converts 2C-methyl-D-erythritol 2,4-cyclodiphosphate (ME-2,4cPP) into 1-hydroxy-2-methyl-2-(E)-butenyl 4-diphosphate. The chain is 4-hydroxy-3-methylbut-2-en-1-yl diphosphate synthase (flavodoxin) from Cronobacter sakazakii (strain ATCC BAA-894) (Enterobacter sakazakii).